An 84-amino-acid chain; its full sequence is Large ribosomal subunit protein bL27 (84 aa).

The interval 1 to 29 (MAHKKGGGSTKNGRDSNPKYLGIKASGGS) is disordered.

Belongs to the bacterial ribosomal protein bL27 family.

In Chlorobium phaeobacteroides (strain BS1), this protein is Large ribosomal subunit protein bL27.